A 310-amino-acid chain; its full sequence is tRNA-cytidine(32) 2-sulfurtransferase (310 aa).

A PP-loop motif motif is present at residues 48-53 (SGGKDS). 3 residues coordinate [4Fe-4S] cluster: cysteine 123, cysteine 126, and cysteine 214.

Belongs to the TtcA family. Homodimer. The cofactor is Mg(2+). [4Fe-4S] cluster is required as a cofactor.

The protein resides in the cytoplasm. The enzyme catalyses cytidine(32) in tRNA + S-sulfanyl-L-cysteinyl-[cysteine desulfurase] + AH2 + ATP = 2-thiocytidine(32) in tRNA + L-cysteinyl-[cysteine desulfurase] + A + AMP + diphosphate + H(+). It participates in tRNA modification. Catalyzes the ATP-dependent 2-thiolation of cytidine in position 32 of tRNA, to form 2-thiocytidine (s(2)C32). The sulfur atoms are provided by the cysteine/cysteine desulfurase (IscS) system. This chain is tRNA-cytidine(32) 2-sulfurtransferase, found in Vibrio vulnificus (strain CMCP6).